The following is a 179-amino-acid chain: CASP-like protein 5A2 (179 aa).

Residues 1–54 are Cytoplasmic-facing; the sequence is MEATSHPAVHPVAVPPQFQGAGPPAIQMKDFPGSPGTAGGLALRFTQFGFSLIS. 2 helical membrane passes run 55 to 75 and 76 to 96; these read LCIM…FLVA and TMVF…YALL. Residues 97–114 are Cytoplasmic-facing; that stretch reads TQRSFRNPLIVSLFVVGD. The helical transmembrane segment at 115–135 threads the bilayer; the sequence is WVTSTMTFAGACAAAGITVLI. Over 136–154 the chain is Extracellular; sequence DNDLEQCGPNHCGRFEAAA. Residues 155–175 form a helical membrane-spanning segment; the sequence is AMAFMSWTATTLSFCLSFWLL. At 176–179 the chain is on the cytoplasmic side; the sequence is ASCR.

Belongs to the Casparian strip membrane proteins (CASP) family. Homodimer and heterodimers.

Its subcellular location is the cell membrane. The polypeptide is CASP-like protein 5A2 (Physcomitrium patens (Spreading-leaved earth moss)).